Consider the following 158-residue polypeptide: NAD(P)H-quinone oxidoreductase subunit J, chloroplastic (158 aa).

It belongs to the complex I 30 kDa subunit family. As to quaternary structure, NDH is composed of at least 16 different subunits, 5 of which are encoded in the nucleus.

It is found in the plastid. The protein localises to the chloroplast thylakoid membrane. The enzyme catalyses a plastoquinone + NADH + (n+1) H(+)(in) = a plastoquinol + NAD(+) + n H(+)(out). It carries out the reaction a plastoquinone + NADPH + (n+1) H(+)(in) = a plastoquinol + NADP(+) + n H(+)(out). NDH shuttles electrons from NAD(P)H:plastoquinone, via FMN and iron-sulfur (Fe-S) centers, to quinones in the photosynthetic chain and possibly in a chloroplast respiratory chain. The immediate electron acceptor for the enzyme in this species is believed to be plastoquinone. Couples the redox reaction to proton translocation, and thus conserves the redox energy in a proton gradient. This is NAD(P)H-quinone oxidoreductase subunit J, chloroplastic from Daucus carota (Wild carrot).